Consider the following 123-residue polypeptide: Ribosome-binding factor A (123 aa).

It belongs to the RbfA family. Monomer. Binds 30S ribosomal subunits, but not 50S ribosomal subunits or 70S ribosomes.

The protein resides in the cytoplasm. Its function is as follows. One of several proteins that assist in the late maturation steps of the functional core of the 30S ribosomal subunit. Associates with free 30S ribosomal subunits (but not with 30S subunits that are part of 70S ribosomes or polysomes). Required for efficient processing of 16S rRNA. May interact with the 5'-terminal helix region of 16S rRNA. The polypeptide is Ribosome-binding factor A (Delftia acidovorans (strain DSM 14801 / SPH-1)).